The following is a 500-amino-acid chain: Glucokinase-1 (500 aa).

Ser2 is subject to N-acetylserine. Position 2 is a phosphoserine (Ser2). The region spanning 12–498 (RAVIQAVDQI…SGVGAALCAL (487 aa)) is the Hexokinase domain. Residues 74 to 216 (NGTERGVLLA…MPMIKVVALT (143 aa)) form a hexokinase small subdomain region. Position 110 (Lys110) interacts with ATP. The glucose-binding stretch occupies residues 158-184 (KLGFTFSYPVDQTSLNSGTLIRWTKGF). A hexokinase large subdomain region spans residues 217-487 (NDTVGTYLSH…RKVHLKIAKD (271 aa)). Ser470 bears the Phosphoserine mark. 487 to 492 (DGSGVG) provides a ligand contact to ATP.

The protein belongs to the hexokinase family. In terms of assembly, monomer.

It catalyses the reaction D-glucose + ATP = D-glucose 6-phosphate + ADP + H(+). It participates in carbohydrate metabolism; hexose metabolism. The protein operates within carbohydrate degradation; glycolysis; D-glyceraldehyde 3-phosphate and glycerone phosphate from D-glucose: step 1/4. In terms of biological role, two isoenzymes, hexokinase-1 and hexokinase-2, can phosphorylate keto- and aldohexoses in yeast, whereas a third isoenzyme, GLK, is specific for aldohexoses. All glucose phosphorylating enzymes are involved in glucose uptake. This is Glucokinase-1 (GLK1) from Saccharomyces cerevisiae (strain ATCC 204508 / S288c) (Baker's yeast).